We begin with the raw amino-acid sequence, 570 residues long: La-related protein 7 (570 aa).

M1 carries the post-translational modification N-acetylmethionine. Positions 1 to 16 (METENQKTMEESTKRK) are enriched in basic and acidic residues. Disordered stretches follow at residues 1 to 24 (METENQKTMEESTKRKEEKKKRSR) and 180 to 364 (LNNP…ERHK). In terms of domain architecture, HTH La-type RNA-binding spans 22–116 (RSRVKQVLAD…KPLGERPKDE (95 aa)). The region spanning 119–197 (RTVYVELLPK…PRKPGIFPKT (79 aa)) is the RRM domain. A compositionally biased stretch (basic residues) spans 213 to 222 (KKKKKKKGRI). K231 participates in a covalent cross-link: Glycyl lysine isopeptide (Lys-Gly) (interchain with G-Cter in SUMO2). T251 is subject to Phosphothreonine. Phosphoserine occurs at positions 253 and 256. T260 bears the Phosphothreonine mark. The span at 286–295 (RAGKRERCSA) shows a compositional bias: basic and acidic residues. Residues S294 and S334 each carry the phosphoserine modification. Position 335 is a phosphothreonine (T335). Residues 340-349 (ETDRKGDSLS) show a composition bias toward basic and acidic residues. The residue at position 347 (S347) is a Phosphoserine. Residues 350 to 363 (KVKRKHKKKHKERH) show a composition bias toward basic residues. K406 is covalently cross-linked (Glycyl lysine isopeptide (Lys-Gly) (interchain with G-Cter in SUMO2)). The 114-residue stretch at 438 to 551 (QFVTGVIVKI…TEKLITKAEK (114 aa)) folds into the xRRM domain.

It belongs to the LARP7 family. Core component of the 7SK RNP complex, at least composed of 7SK RNA, LARP7, MEPCE, HEXIM1 (or HEXIM2) and P-TEFb (composed of CDK9 and CCNT1/cyclin-T1). Interacts with METTL16. Interacts with RBM7; upon genotoxic stress this interaction is enhanced, triggering the release of inactive P-TEFb complex from the core, yielding to P-TEFb complex activation. Associates with box C/D small nucleolar ribonucleoprotein (snoRNP) complexes.

It is found in the nucleus. It localises to the nucleoplasm. Its function is as follows. RNA-binding protein that specifically binds distinct small nuclear RNA (snRNAs) and regulates their processing and function. Specifically binds the 7SK snRNA (7SK RNA) and acts as a core component of the 7SK ribonucleoprotein (RNP) complex, thereby acting as a negative regulator of transcription elongation by RNA polymerase II. The 7SK RNP complex sequesters the positive transcription elongation factor b (P-TEFb) in a large inactive 7SK RNP complex preventing RNA polymerase II phosphorylation and subsequent transcriptional elongation. The 7SK RNP complex also promotes snRNA gene transcription by RNA polymerase II via interaction with the little elongation complex (LEC). LARP7 specifically binds to the highly conserved 3'-terminal U-rich stretch of 7SK RNA; on stimulation, remains associated with 7SK RNA, whereas P-TEFb is released from the complex. LARP7 also acts as a regulator of mRNA splicing fidelity by promoting U6 snRNA processing. Specifically binds U6 snRNAs and associates with a subset of box C/D RNP complexes: promotes U6 snRNA 2'-O-methylation by facilitating U6 snRNA loading into box C/D RNP complexes. U6 snRNA 2'-O-methylation is required for mRNA splicing fidelity. Binds U6 snRNAs with a 5'-CAGGG-3' sequence motif. U6 snRNA processing is required for spermatogenesis. The protein is La-related protein 7 of Mus musculus (Mouse).